A 599-amino-acid polypeptide reads, in one-letter code: Elongation factor 4 (599 aa).

Positions 2–184 (KNIRNFSIIA…RLVRDIPPPE (183 aa)) constitute a tr-type G domain. GTP is bound by residues 14-19 (DHGKST) and 131-134 (NKID).

Belongs to the TRAFAC class translation factor GTPase superfamily. Classic translation factor GTPase family. LepA subfamily.

It is found in the cell inner membrane. The catalysed reaction is GTP + H2O = GDP + phosphate + H(+). In terms of biological role, required for accurate and efficient protein synthesis under certain stress conditions. May act as a fidelity factor of the translation reaction, by catalyzing a one-codon backward translocation of tRNAs on improperly translocated ribosomes. Back-translocation proceeds from a post-translocation (POST) complex to a pre-translocation (PRE) complex, thus giving elongation factor G a second chance to translocate the tRNAs correctly. Binds to ribosomes in a GTP-dependent manner. This Sodalis glossinidius (strain morsitans) protein is Elongation factor 4.